Reading from the N-terminus, the 254-residue chain is Small ribosomal subunit protein uS3 (254 aa).

One can recognise a KH type-2 domain in the interval 39-109 (IRNYISARLK…EVKIDVIEVI (71 aa)). The tract at residues 220–254 (EEMKKMQERRNDSRGRGRGDGRGAKRRRRPAAKKA) is disordered. Positions 221–242 (EMKKMQERRNDSRGRGRGDGRG) are enriched in basic and acidic residues. Residues 243–254 (AKRRRRPAAKKA) are compositionally biased toward basic residues.

The protein belongs to the universal ribosomal protein uS3 family. Part of the 30S ribosomal subunit. Forms a tight complex with proteins S10 and S14.

Functionally, binds the lower part of the 30S subunit head. Binds mRNA in the 70S ribosome, positioning it for translation. This chain is Small ribosomal subunit protein uS3, found in Chlorobaculum parvum (strain DSM 263 / NCIMB 8327) (Chlorobium vibrioforme subsp. thiosulfatophilum).